The sequence spans 394 residues: ATP phosphoribosyltransferase regulatory subunit (394 aa).

Belongs to the class-II aminoacyl-tRNA synthetase family. HisZ subfamily. As to quaternary structure, heteromultimer composed of HisG and HisZ subunits.

The protein resides in the cytoplasm. The protein operates within amino-acid biosynthesis; L-histidine biosynthesis; L-histidine from 5-phospho-alpha-D-ribose 1-diphosphate: step 1/9. In terms of biological role, required for the first step of histidine biosynthesis. May allow the feedback regulation of ATP phosphoribosyltransferase activity by histidine. The chain is ATP phosphoribosyltransferase regulatory subunit from Geobacillus kaustophilus (strain HTA426).